The chain runs to 204 residues: Glycerol-3-phosphate acyltransferase (204 aa).

The next 5 helical transmembrane spans lie at 8–28, 53–73, 81–101, 116–136, and 155–175; these read ILIF…CYIF, VPAA…VVIA, FITA…IFFG, FGFS…VAII, and VIFT…IIIL.

It belongs to the PlsY family. In terms of assembly, probably interacts with PlsX.

Its subcellular location is the cell inner membrane. The catalysed reaction is an acyl phosphate + sn-glycerol 3-phosphate = a 1-acyl-sn-glycero-3-phosphate + phosphate. The protein operates within lipid metabolism; phospholipid metabolism. In terms of biological role, catalyzes the transfer of an acyl group from acyl-phosphate (acyl-PO(4)) to glycerol-3-phosphate (G3P) to form lysophosphatidic acid (LPA). This enzyme utilizes acyl-phosphate as fatty acyl donor, but not acyl-CoA or acyl-ACP. This Francisella tularensis subsp. holarctica (strain FTNF002-00 / FTA) protein is Glycerol-3-phosphate acyltransferase.